A 156-amino-acid chain; its full sequence is ATP synthase subunit b (156 aa).

The chain crosses the membrane as a helical span at residues 3–23 (ITFTIFAQSLAFAALIWIVAT).

This sequence belongs to the ATPase B chain family. In terms of assembly, F-type ATPases have 2 components, F(1) - the catalytic core - and F(0) - the membrane proton channel. F(1) has five subunits: alpha(3), beta(3), gamma(1), delta(1), epsilon(1). F(0) has three main subunits: a(1), b(2) and c(10-14). The alpha and beta chains form an alternating ring which encloses part of the gamma chain. F(1) is attached to F(0) by a central stalk formed by the gamma and epsilon chains, while a peripheral stalk is formed by the delta and b chains.

It is found in the cell inner membrane. In terms of biological role, f(1)F(0) ATP synthase produces ATP from ADP in the presence of a proton or sodium gradient. F-type ATPases consist of two structural domains, F(1) containing the extramembraneous catalytic core and F(0) containing the membrane proton channel, linked together by a central stalk and a peripheral stalk. During catalysis, ATP synthesis in the catalytic domain of F(1) is coupled via a rotary mechanism of the central stalk subunits to proton translocation. Functionally, component of the F(0) channel, it forms part of the peripheral stalk, linking F(1) to F(0). This Xylella fastidiosa (strain 9a5c) protein is ATP synthase subunit b.